The chain runs to 394 residues: Growth-regulating factor 4 (394 aa).

In terms of domain architecture, QLQ spans 64–99; sequence PFTAAQYEELEQQALIYKYLVAGVPVPPDLVLPIRR. Residues 125–169 enclose the WRC domain; it reads DPEPGRCRRTDGKKWRCSKEAAPDSKYCERHMHRGRNRSRKPVET. 2 short sequence motifs (bipartite nuclear localization signal) span residues 130 to 140 and 158 to 165; these read RCRRTDGKKWR and RGRNRSRK. The disordered stretch occupies residues 156 to 180; it reads MHRGRNRSRKPVETQLVAQSQPPSS. Low complexity predominate over residues 170–180; sequence QLVAQSQPPSS.

This sequence belongs to the GRF family. In terms of assembly, interacts with GIF1. Interacts with GSK2. As to expression, expressed in stems. Expressed in panicles.

The protein resides in the nucleus. Transactivation activity is repressed by GSK2. Transcription activator that plays a role in the regulation of meristematic function in leaves, stems and inflorescences. Transcription activator that plays a regulatory role in grain development. Positively regulates grain size by promoting cell division and expansion, leading to increased grain length and width. Positively regulates the expression of genes promoting cell proliferation. Activates the expression of expansin genes to promote cell expansion and grain size. May promote grain size by activating brassinosteroid responses. Component of a network formed by the microRNA396 (miRNA396), the GRFs and their interacting factors (GIFs) acting in the regulation of meristem function, at least partially through the control of cell proliferation. Component of the miRNA396c-GRF4-GIF1 regulatory module that plays an important role in grain size determination. The protein is Growth-regulating factor 4 of Oryza sativa subsp. japonica (Rice).